The chain runs to 108 residues: MTDTPVEESLFQIIHCFHQYAARQGDMETLSLQELQALLMDNMPRFMDSLGQKEPYYVTELFQATDKNRDNQICFDEFLYILGKLVKDYHLQYHRQLCARYCAQHSLY.

The 36-residue stretch at 53-88 (KEPYYVTELFQATDKNRDNQICFDEFLYILGKLVKD) folds into the EF-hand domain. Ca(2+)-binding residues include D66, N68, D70, Q72, and E77.

The protein belongs to the S-100 family.

This is Protein S100-A15A (S100A15A) from Gorilla gorilla gorilla (Western lowland gorilla).